Reading from the N-terminus, the 273-residue chain is Vacuolar iron transporter (273 aa).

The Cytoplasmic segment spans residues 1–47 (MVSKKTIEARKAYYNEDVVLSKEAHDFYHNLDKHGENHNLDKDNLKT). The chain crosses the membrane as a helical span at residues 48-68 (IIFGSLDGIITIFAIVSGCVG). Topologically, residues 69–75 (AKITPTQ) are vacuolar. The chain crosses the membrane as a helical span at residues 76–96 (VIIIGIGNLFANAISMGFSEY). Residues 97–181 (TSSTAQRDFM…NEDKNECLKK (85 aa)) lie on the Cytoplasmic side of the membrane. Positions 113, 116, 124, 127, 161, and 165 each coordinate Fe cation. The chain crosses the membrane as a helical span at residues 182–202 (GIIMFLSFAVFGIIPLSAYVA). Residues 203 to 212 (YTVFFGYTDY) are Vacuolar-facing. A helical membrane pass occupies residues 213–233 (TTSFLVVFISTLTTLFILGLF). At 234-246 (KSQFTNQKPITCA) the chain is on the cytoplasmic side. Residues 247–267 (LYMVLNGMIAGMVPFLLGVVL) traverse the membrane as a helical segment. Residues 268–273 (KNNISE) lie on the Vacuolar side of the membrane.

Belongs to the CCC1 family. As to quaternary structure, monomer.

It localises to the vacuole membrane. The protein localises to the endoplasmic reticulum membrane. Its subcellular location is the cytoplasmic vesicle membrane. The catalysed reaction is Fe(2+)(in) = Fe(2+)(out). Its function is as follows. Vacuolar iron transporter involved in the transfer of iron ions from the cytosol to the vacuole for intracellular iron storage. Involved in detoxification of excess iron. The transport mechanism is not well defined and the role of protons is not clear. The sequence is that of Vacuolar iron transporter from Plasmodium falciparum (isolate 3D7).